We begin with the raw amino-acid sequence, 82 residues long: Sulfur carrier protein TusA (82 aa).

The active-site Cysteine persulfide intermediate is Cys-17.

The protein belongs to the sulfur carrier protein TusA family.

The protein resides in the cytoplasm. Sulfur carrier protein which probably makes part of a sulfur-relay system. The polypeptide is Sulfur carrier protein TusA (Glaesserella parasuis serovar 5 (strain SH0165) (Haemophilus parasuis)).